The primary structure comprises 350 residues: tRNA pseudouridine synthase D (350 aa).

Residue Asp-85 is the Nucleophile of the active site. One can recognise a TRUD domain in the interval 160–310 (GVINYFGEQR…EAARRTILLR (151 aa)).

It belongs to the pseudouridine synthase TruD family.

The enzyme catalyses uridine(13) in tRNA = pseudouridine(13) in tRNA. Responsible for synthesis of pseudouridine from uracil-13 in transfer RNAs. This Idiomarina loihiensis (strain ATCC BAA-735 / DSM 15497 / L2-TR) protein is tRNA pseudouridine synthase D.